Here is a 199-residue protein sequence, read N- to C-terminus: Recombination protein RecR (199 aa).

The segment at 58 to 73 (CRRCFNLTEGEECDIC) adopts a C4-type zinc-finger fold. One can recognise a Toprim domain in the interval 81–176 (SVICVVEDPY…RVTALASGLP (96 aa)).

This sequence belongs to the RecR family.

Functionally, may play a role in DNA repair. It seems to be involved in an RecBC-independent recombinational process of DNA repair. It may act with RecF and RecO. The chain is Recombination protein RecR from Rubrobacter xylanophilus (strain DSM 9941 / JCM 11954 / NBRC 16129 / PRD-1).